An 87-amino-acid polypeptide reads, in one-letter code: Defensin-like protein 175 (87 aa).

The first 23 residues, Met-1 to Gln-23, serve as a signal peptide directing secretion. Disulfide bonds link Cys-27–Cys-66, Cys-36–Cys-55, Cys-39–Cys-60, and Cys-43–Cys-62.

This sequence belongs to the DEFL family.

Its subcellular location is the secreted. This Arabidopsis thaliana (Mouse-ear cress) protein is Defensin-like protein 175.